The sequence spans 840 residues: Phosphatidylglycerol lysyltransferase (840 aa).

Residues M1–K8 are Cytoplasmic-facing. Residues I9 to L29 traverse the membrane as a helical segment. Over Y30 to S52 the chain is Extracellular. A helical membrane pass occupies residues L53–I73. Over L74–R89 the chain is Cytoplasmic. A helical transmembrane segment spans residues V90–G110. Residues V111 to H128 are Extracellular-facing. A helical membrane pass occupies residues F129–V149. Residues F150 to K161 are Cytoplasmic-facing. A helical membrane pass occupies residues I162–Y182. Over S183–T200 the chain is Extracellular. Residues L201 to V221 form a helical membrane-spanning segment. Residues D222–S229 lie on the Cytoplasmic side of the membrane. The helical transmembrane segment at F230–F250 threads the bilayer. The Extracellular segment spans residues G251–V271. A helical transmembrane segment spans residues L272–I292. Residues L293–S337 lie on the Cytoplasmic side of the membrane. A helical transmembrane segment spans residues L338–Y358. The Extracellular segment spans residues D359–Y369. The chain crosses the membrane as a helical span at residues Y370–I390. Over Y391–S394 the chain is Cytoplasmic. The next 2 helical transmembrane spans lie at R395–T415 and Y416–F436. Residues R437–N450 lie on the Cytoplasmic side of the membrane. Residues I451 to G471 form a helical membrane-spanning segment. Residues T472–R489 are Extracellular-facing. The helical transmembrane segment at Y490–F510 threads the bilayer. Residues D511–K840 lie on the Cytoplasmic side of the membrane.

Belongs to the LPG synthase family.

The protein localises to the cell membrane. The enzyme catalyses L-lysyl-tRNA(Lys) + a 1,2-diacyl-sn-glycero-3-phospho-(1'-sn-glycerol) = a 1,2-diacyl-sn-glycero-3-phospho-1'-(3'-O-L-lysyl)-sn-glycerol + tRNA(Lys). Functionally, catalyzes the transfer of a lysyl group from L-lysyl-tRNA(Lys) to membrane-bound phosphatidylglycerol (PG), which produces lysylphosphatidylglycerol (LPG), a major component of the bacterial membrane with a positive net charge. LPG synthesis contributes to bacterial virulence as it is involved in the resistance mechanism against cationic antimicrobial peptides (CAMP) produces by the host's immune system (defensins, cathelicidins) and by the competing microorganisms (bacteriocins). In fact, the modification of anionic phosphatidylglycerol with positively charged L-lysine results in repulsion of the peptides. The chain is Phosphatidylglycerol lysyltransferase (mprF) from Staphylococcus aureus (strain MSSA476).